The following is a 952-amino-acid chain: MAPVAITPATLVGHDLKSSRASERATELSPVTLLDIFSRAVSLYPKHELSFVTSSAHDSSVQTRSFSEFDQYARALAWAMLAWGKPTGSVIVVYFTEHEDNMAAVWACLLAGHVPCLQPALSEQQAHKEGHVAHIKNLFSSATWLTNESGAEQVHSITGLDIRLLSELKARAETVGADFHAHQPNPDDEAILFLTSGSTGFSKVVVHTHRTILAACNAKGQSYGLTSESKTMNWVGFDHVAGSLEMHIAPLLYGASQLHVHVSAILADPSRFLRLIEEKSIQLAFAPNFLLAKLTRDLEKCSDLFGKFDLSSIKRINSGGEAVVSSTAQAFARTLKNFAKDGNASFVISAGFGTTETCAGCIYDPIDVLFTPPSYEFLELGTPLTGCEMCIVNPQDGVTPRPDGESGELQVRGPMVFVRYYNDPKATTSSFIEGVWYRTGDVGIIEKGKMRLNGRIKDTVIVHGVSYGIAELETYLQTVEGVTHSFLAAAPHRDPGQETEGFVIFYSPTFELDSEDAPAKLYATHRALRDVSVKMITLPPQQIIPIPLNQMEKTTLGKLSRVCLVNLFKQGELANHIARAEELLSIARGATFIAPSTETEKTLGRLYAEIFNLRVSDVSASDNFFELGGNSIDVIKLKREAESLFELPEILTVQILKHPVISSLAKYVDSLVSKDGSQEEYDPVVPLQLTSNKTPIFMVHPGIGEVLAYVDLAKYFQNERPFFALRVRGFEGQPLFTSMDEMASSYAAGAKRTQPHGPYAIAGYSYGGVVAFEVAKRLESMGDEVKFIGLVDIPPHIADRMHDWTSGMLNLSHLLGLMSKQDADNLAPSLRTLTRKEQFEVLWKLSPPERLTELQLTPEKHENWVYIAGGLSECGMTYQPGGSVSVLDVFYAMPPHDTKEDWLNQHLRRWADFCRSEPSFTNVPGHHDTLMDFDHVSGFQKIFRDALEARGL.

The tract at residues 58–462 (DSSVQTRSFS…NGRIKDTVIV (405 aa)) is adenylation (A) domain. Residues 594–672 (APSTETEKTL…SLAKYVDSLV (79 aa)) form the Carrier domain. A thiolation and peptide carrier (T) domain region spans residues 599–669 (TEKTLGRLYA…VISSLAKYVD (71 aa)). The residue at position 631 (Ser631) is an O-(pantetheine 4'-phosphoryl)serine. The interval 695–939 (PIFMVHPGIG…LMDFDHVSGF (245 aa)) is thioesterase (TE) domain.

This sequence belongs to the ATP-dependent AMP-binding enzyme family.

In terms of biological role, inactive atromentin synthetase homolog. Does not accept 4-hydroxyphenylpyruvate (4-HPP) as substrate. Both the adenylation (A) and the thioesterase (TE) domain of the invA6 enzyme are inactive. This Paxillus involutus (Naked brimcap) protein is Inactive atromentin synthetase invA6 (invA6).